Reading from the N-terminus, the 802-residue chain is Threonine--tRNA ligase 2, cytoplasmic (802 aa).

A2 carries the N-acetylalanine modification. 2 coiled-coil regions span residues 3-23 (AEAL…EDIR) and 76-96 (AEER…AQEA). The segment covering 86-98 (ESAELEAAQEAGA) has biased composition (low complexity). A disordered region spans residues 86-123 (ESAELEAAQEAGAQPPPSQSQDKDMKKKKMKESEADSE). Residues 106-123 (QDKDMKKKKMKESEADSE) show a composition bias toward basic and acidic residues. One can recognise a TGS domain in the interval 157–222 (DTSNIITVRV…EGDSSLELLT (66 aa)). The residue at position 453 (S453) is a Phosphoserine. Residues 786–792 (KLKNLRK) carry the Nuclear localization signal motif.

This sequence belongs to the class-II aminoacyl-tRNA synthetase family. May be a component of the multisynthetase complex (MSC), a large multi-subunit complex which contains at least eight different aminoacyl-tRNA synthetases plus three auxillary subunits AIMP1, AIMP2 and EEF1E1. Interacts with the MSC components EPRS1, AIMP1, AIMP2 and KARS1.

Its subcellular location is the cytoplasm. The protein localises to the nucleus. It catalyses the reaction tRNA(Thr) + L-threonine + ATP = L-threonyl-tRNA(Thr) + AMP + diphosphate + H(+). Its function is as follows. Catalyzes the attachment of threonine to tRNA(Thr) in a two-step reaction: threonine is first activated by ATP to form Thr-AMP and then transferred to the acceptor end of tRNA(Thr). Also edits incorrectly charged tRNA(Thr) via its editing domain, at the post-transfer stage. The sequence is that of Threonine--tRNA ligase 2, cytoplasmic from Homo sapiens (Human).